Here is a 200-residue protein sequence, read N- to C-terminus: Holliday junction branch migration complex subunit RuvA (200 aa).

Residues 1-64 form a domain I region; the sequence is MIGQLTGLVG…EDAIQLFGFA (64 aa). The interval 65-143 is domain II; sequence TTDERDWFRL…KMPGGGGTVS (79 aa). The segment at 144–148 is flexible linker; it reads APGIV. The domain III stretch occupies residues 149–200; that stretch reads SGPSVENDALLALAGLGFRRAEAWPVLSKVLAENENATLDLAIRLSLKDLAR.

Belongs to the RuvA family. Homotetramer. Forms an RuvA(8)-RuvB(12)-Holliday junction (HJ) complex. HJ DNA is sandwiched between 2 RuvA tetramers; dsDNA enters through RuvA and exits via RuvB. An RuvB hexamer assembles on each DNA strand where it exits the tetramer. Each RuvB hexamer is contacted by two RuvA subunits (via domain III) on 2 adjacent RuvB subunits; this complex drives branch migration. In the full resolvosome a probable DNA-RuvA(4)-RuvB(12)-RuvC(2) complex forms which resolves the HJ.

It localises to the cytoplasm. Functionally, the RuvA-RuvB-RuvC complex processes Holliday junction (HJ) DNA during genetic recombination and DNA repair, while the RuvA-RuvB complex plays an important role in the rescue of blocked DNA replication forks via replication fork reversal (RFR). RuvA specifically binds to HJ cruciform DNA, conferring on it an open structure. The RuvB hexamer acts as an ATP-dependent pump, pulling dsDNA into and through the RuvAB complex. HJ branch migration allows RuvC to scan DNA until it finds its consensus sequence, where it cleaves and resolves the cruciform DNA. The sequence is that of Holliday junction branch migration complex subunit RuvA from Gluconobacter oxydans (strain 621H) (Gluconobacter suboxydans).